Reading from the N-terminus, the 59-residue chain is Putative conotoxin (59 aa).

The signal sequence occupies residues 1–25 (MGMRMMFTVFLLVVLATTVVPITLA). Positions 26 to 47 (SATDGRNAAANARVSPVISKSS) are excised as a propeptide.

This sequence belongs to the conotoxin A superfamily. Expressed by the venom duct.

The protein resides in the secreted. In terms of biological role, acts as a neurotoxin. The chain is Putative conotoxin from Conus imperialis (Imperial cone).